A 275-amino-acid chain; its full sequence is Voltage-dependent calcium channel gamma-5 subunit (275 aa).

4 consecutive transmembrane segments (helical) span residues 8-28 (ALTL…GIAV), 103-123 (FPLV…IGHI), 129-149 (ILAF…VVGL), and 181-201 (FAAI…YLFM).

Belongs to the PMP-22/EMP/MP20 family. CACNG subfamily. In terms of assembly, the L-type calcium channel is composed of five subunits: alpha-1, alpha-2/delta, beta and gamma. Acts as an auxiliary subunit for AMPA-selective glutamate receptors (AMPARs). Found in a complex with GRIA1, GRIA2, GRIA3, GRIA4, CNIH2, CNIH3, CACNG2, CACNG3, CACNG4, CACNG7 and CACNG8. Interacts with GRIA1, GRIA2, GRIA3 and GRIA4.

Its subcellular location is the membrane. It localises to the postsynaptic density membrane. Regulates the gating properties of AMPA-selective glutamate receptors (AMPARs). Modulates their gating properties by accelerating their rates of activation, deactivation and desensitization. Displays subunit-specific AMPA receptor regulation. Shows specificity for GRIA1, GRIA4 and the long isoform of GRIA2. According to PubMed:18817736, shows only specificity for GRIA2 and specifically to the form of GRIA2 for which a single amino acid in the pore region has been edited from a glutamine to an arginine residue. Thought to stabilize the calcium channel in an inactivated (closed) state. The sequence is that of Voltage-dependent calcium channel gamma-5 subunit (Cacng5) from Rattus norvegicus (Rat).